An 881-amino-acid polypeptide reads, in one-letter code: Dynamin-like GTPase MGM1, mitochondrial (881 aa).

Residues 1-59 (MNASPVRLLILRRQLATHPAILYSSPYIKSPLVHLHSRMSNVHRSAHANALSFVITRRS) constitute a mitochondrion transit peptide. Topologically, residues 60 to 72 (ISHFPKIISKIIR) are mitochondrial matrix. A helical; Signal-anchor for type II membrane protein transmembrane segment spans residues 73–92 (LPIYVGGGMAAAGSYIAYKM). Over 93 to 881 (EEASSFTKDK…KSYKGVSKNL (789 aa)) the chain is Mitochondrial intermembrane. Residues 145-183 (ATSLDDDESKRQGDPKDDDDEDDDDEDDENDSVDTTQDE) are disordered. The span at 160-176 (KDDDDEDDDDEDDENDS) shows a compositional bias: acidic residues. In terms of domain architecture, Dynamin-type G spans 207–505 (HLTLPSIVVI…LEISMSNALE (299 aa)). The interval 217–224 (GSQSSGKS) is G1 motif. 7 residues coordinate GTP: S220, S221, G222, K223, S224, S225, and G239. S224 contacts Mg(2+). The segment at 243–245 (VTR) is G2 motif. T244 and D317 together coordinate Mg(2+). The segment at 317–320 (DLPG) is G3 motif. Residues 385–388 (TKLD) form a G4 motif region. GTP contacts are provided by K386, D388, and T415. Positions 414–417 (ITKT) are G5 motif. Residues 668–780 (STADQVENCI…KMLKNKCHST (113 aa)) are paddle region. C777 and C786 are joined by a disulfide. Residues 780–872 (TIEKDRCPEV…KIDSILVFKK (93 aa)) enclose the GED domain.

Belongs to the TRAFAC class dynamin-like GTPase superfamily. Dynamin/Fzo/YdjA family. Oligomeric complex consisting of membrane-bound and soluble forms of MGM1. Associates with FZO1 through interaction with the intermembrane space domain of UGO1 which binds FZO1 through its cytoplasmic domain. Post-translationally, cleavage of the transit peptide by mitochondrial processing protease (MPP) produces a long integral membrane form of MGM1 (l-MGM1). Further processing by the rhomboid protease PCP1 produces a short peripheral membrane form of MGM1 (s-MGM1). Both isoforms are required for full activity.

The protein localises to the mitochondrion inner membrane. It is found in the mitochondrion intermembrane space. It carries out the reaction GTP + H2O = GDP + phosphate + H(+). In terms of biological role, dynamin-related GTPase that is essential for normal mitochondrial morphology by mediating fusion of the mitochondrial inner membranes, regulating cristae morphology and maintaining respiratory chain function. Exists in two forms: the transmembrane, long form (Dynamin-like GTPase MGM1, long form; L-MGM1), which is tethered to the inner mitochondrial membrane, and the short soluble form (Dynamin-like GTPase MGM1, short form; S-MGM1), which results from proteolytic cleavage and localizes in the intermembrane space. Both forms (L-MGM1 and S-MGM1) cooperate to catalyze the fusion of the mitochondrial inner membrane. The equilibrium between L-MGM1 and S-MGM1 is essential: excess levels of S-MGM1, following loss of mitochondrial membrane potential, lead to an impaired equilibrium between L-MGM1 and S-MGM1, inhibiting mitochondrial fusion. Plays a role in the maintenance and remodeling of mitochondrial cristae, some invaginations of the mitochondrial inner membrane that provide an increase in the surface area. Probably acts by forming helical filaments at the inside of inner membrane tubes with the shape and dimensions of crista junctions. Constitutes the transmembrane long form (L-MGM1) that plays a central role in mitochondrial inner membrane fusion and cristae morphology. L-MGM1 and the soluble short form (S-MGM1) form higher-order helical assemblies that coordinate the fusion of mitochondrial inner membranes. Inner membrane-anchored L-MGM1 molecules initiate membrane remodeling by recruiting soluble S-MGM1 to rapidly polymerize into a flexible cylindrical scaffold encaging the mitochondrial inner membrane. Once at the membrane surface, the formation of S-MGM1 helices induce bilayer curvature. MGM1 dimerization through the paddle region, which inserts into cardiolipin-containing membrane, promotes GTP hydrolysis and the helical assembly of a flexible MGM1 lattice on the membrane, which drives membrane curvature and mitochondrial fusion. Functionally, constitutes the soluble short form (S-MGM1) generated by cleavage by PCP1, which plays a central role in mitochondrial inner membrane fusion and cristae morphology. The transmembrane long form (L-MGM1) and the S-MGM1 form higher-order helical assemblies that coordinate the fusion of mitochondrial inner membranes. Inner membrane-anchored L-MGM1 molecules initiate membrane remodeling by recruiting soluble S-MGM1 to rapidly polymerize into a flexible cylindrical scaffold encaging the mitochondrial inner membrane. Once at the membrane surface, the formation of S-MGM1 helices induce bilayer curvature. MGM1 dimerization through the paddle region, which inserts into cardiolipin-containing membrane, promotes GTP hydrolysis and the helical assembly of a flexible MGM1 lattice on the membrane, which drives membrane curvature and mitochondrial fusion. Excess levels of S-MGM1 produced by cleavage by PCP1 following stress conditions that induce loss of mitochondrial membrane potential, lead to an impaired equilibrium between L-MGM1 and S-MGM1, thereby inhibiting mitochondrial fusion. The protein is Dynamin-like GTPase MGM1, mitochondrial of Saccharomyces cerevisiae (strain ATCC 204508 / S288c) (Baker's yeast).